A 108-amino-acid chain; its full sequence is ATP-dependent Clp protease adapter protein ClpS (108 aa).

Residues 1–15 show a composition bias toward basic and acidic residues; that stretch reads MPHESSPDSQHEHGV. Residues 1-22 form a disordered region; sequence MPHESSPDSQHEHGVAVEAARP.

It belongs to the ClpS family. In terms of assembly, binds to the N-terminal domain of the chaperone ClpA.

Involved in the modulation of the specificity of the ClpAP-mediated ATP-dependent protein degradation. This Stenotrophomonas maltophilia (strain K279a) protein is ATP-dependent Clp protease adapter protein ClpS.